We begin with the raw amino-acid sequence, 142 residues long: ATP synthase epsilon chain (142 aa).

Belongs to the ATPase epsilon chain family. F-type ATPases have 2 components, CF(1) - the catalytic core - and CF(0) - the membrane proton channel. CF(1) has five subunits: alpha(3), beta(3), gamma(1), delta(1), epsilon(1). CF(0) has three main subunits: a, b and c.

The protein localises to the cell inner membrane. In terms of biological role, produces ATP from ADP in the presence of a proton gradient across the membrane. The polypeptide is ATP synthase epsilon chain (Shewanella putrefaciens (strain CN-32 / ATCC BAA-453)).